The chain runs to 265 residues: Thiazole synthase (265 aa).

Residue Lys-107 is the Schiff-base intermediate with DXP of the active site. 1-deoxy-D-xylulose 5-phosphate-binding positions include Gly-168, 194-195, and 216-217; these read AG and NT.

This sequence belongs to the ThiG family. As to quaternary structure, homotetramer. Forms heterodimers with either ThiH or ThiS.

It is found in the cytoplasm. The catalysed reaction is [ThiS sulfur-carrier protein]-C-terminal-Gly-aminoethanethioate + 2-iminoacetate + 1-deoxy-D-xylulose 5-phosphate = [ThiS sulfur-carrier protein]-C-terminal Gly-Gly + 2-[(2R,5Z)-2-carboxy-4-methylthiazol-5(2H)-ylidene]ethyl phosphate + 2 H2O + H(+). Its pathway is cofactor biosynthesis; thiamine diphosphate biosynthesis. In terms of biological role, catalyzes the rearrangement of 1-deoxy-D-xylulose 5-phosphate (DXP) to produce the thiazole phosphate moiety of thiamine. Sulfur is provided by the thiocarboxylate moiety of the carrier protein ThiS. In vitro, sulfur can be provided by H(2)S. This chain is Thiazole synthase, found in Pseudomonas paraeruginosa (strain DSM 24068 / PA7) (Pseudomonas aeruginosa (strain PA7)).